The following is a 219-amino-acid chain: Chloramphenicol acetyltransferase (219 aa).

Catalysis depends on His190, which acts as the Proton acceptor.

This sequence belongs to the chloramphenicol acetyltransferase family. In terms of assembly, homotrimer.

It catalyses the reaction chloramphenicol + acetyl-CoA = chloramphenicol 3-acetate + CoA. In terms of biological role, this enzyme is an effector of chloramphenicol resistance in bacteria. In Clostridium butyricum, this protein is Chloramphenicol acetyltransferase (catB).